The chain runs to 205 residues: Ribosomal RNA small subunit methyltransferase G (205 aa).

S-adenosyl-L-methionine contacts are provided by residues G66, F71, 119 to 120, and R135; that span reads IE.

This sequence belongs to the methyltransferase superfamily. RNA methyltransferase RsmG family.

It is found in the cytoplasm. The catalysed reaction is guanosine(527) in 16S rRNA + S-adenosyl-L-methionine = N(7)-methylguanosine(527) in 16S rRNA + S-adenosyl-L-homocysteine. Specifically methylates the N7 position of guanine in position 527 of 16S rRNA. The polypeptide is Ribosomal RNA small subunit methyltransferase G (Rhizobium johnstonii (strain DSM 114642 / LMG 32736 / 3841) (Rhizobium leguminosarum bv. viciae)).